The chain runs to 299 residues: Oxygen-dependent coproporphyrinogen-III oxidase (299 aa).

Substrate is bound at residue Ser92. A divalent metal cation-binding residues include His96 and His106. Residue His106 is the Proton donor of the active site. 108–110 (NVR) is a binding site for substrate. 2 residues coordinate a divalent metal cation: His145 and His175. Residues 239–274 (YVEFNLVYDRGTLFGLQSGGRAESILMSLPPRVRWE) are important for dimerization. 257-259 (GGR) contacts substrate.

It belongs to the aerobic coproporphyrinogen-III oxidase family. Homodimer. It depends on a divalent metal cation as a cofactor.

Its subcellular location is the cytoplasm. It carries out the reaction coproporphyrinogen III + O2 + 2 H(+) = protoporphyrinogen IX + 2 CO2 + 2 H2O. It participates in porphyrin-containing compound metabolism; protoporphyrin-IX biosynthesis; protoporphyrinogen-IX from coproporphyrinogen-III (O2 route): step 1/1. Its function is as follows. Involved in the heme biosynthesis. Catalyzes the aerobic oxidative decarboxylation of propionate groups of rings A and B of coproporphyrinogen-III to yield the vinyl groups in protoporphyrinogen-IX. This Xanthomonas axonopodis pv. citri (strain 306) protein is Oxygen-dependent coproporphyrinogen-III oxidase.